Consider the following 151-residue polypeptide: 3-hydroxyacyl-[acyl-carrier-protein] dehydratase FabZ (151 aa).

The active site involves His-49.

The protein belongs to the thioester dehydratase family. FabZ subfamily.

The protein localises to the cytoplasm. The catalysed reaction is a (3R)-hydroxyacyl-[ACP] = a (2E)-enoyl-[ACP] + H2O. In terms of biological role, involved in unsaturated fatty acids biosynthesis. Catalyzes the dehydration of short chain beta-hydroxyacyl-ACPs and long chain saturated and unsaturated beta-hydroxyacyl-ACPs. The protein is 3-hydroxyacyl-[acyl-carrier-protein] dehydratase FabZ of Bordetella parapertussis (strain 12822 / ATCC BAA-587 / NCTC 13253).